Consider the following 345-residue polypeptide: S-adenosylmethionine:tRNA ribosyltransferase-isomerase (345 aa).

The protein belongs to the QueA family. In terms of assembly, monomer.

It is found in the cytoplasm. It carries out the reaction 7-aminomethyl-7-carbaguanosine(34) in tRNA + S-adenosyl-L-methionine = epoxyqueuosine(34) in tRNA + adenine + L-methionine + 2 H(+). It functions in the pathway tRNA modification; tRNA-queuosine biosynthesis. Its function is as follows. Transfers and isomerizes the ribose moiety from AdoMet to the 7-aminomethyl group of 7-deazaguanine (preQ1-tRNA) to give epoxyqueuosine (oQ-tRNA). This chain is S-adenosylmethionine:tRNA ribosyltransferase-isomerase, found in Helicobacter pylori (strain Shi470).